The primary structure comprises 475 residues: 3-isopropylmalate dehydratase large subunit (475 aa).

[4Fe-4S] cluster-binding residues include Cys-349, Cys-409, and Cys-412.

The protein belongs to the aconitase/IPM isomerase family. LeuC type 1 subfamily. As to quaternary structure, heterodimer of LeuC and LeuD. [4Fe-4S] cluster is required as a cofactor.

It catalyses the reaction (2R,3S)-3-isopropylmalate = (2S)-2-isopropylmalate. Its pathway is amino-acid biosynthesis; L-leucine biosynthesis; L-leucine from 3-methyl-2-oxobutanoate: step 2/4. In terms of biological role, catalyzes the isomerization between 2-isopropylmalate and 3-isopropylmalate, via the formation of 2-isopropylmaleate. This chain is 3-isopropylmalate dehydratase large subunit, found in Cereibacter sphaeroides (strain ATCC 17029 / ATH 2.4.9) (Rhodobacter sphaeroides).